The sequence spans 487 residues: NADH-quinone oxidoreductase subunit N (487 aa).

14 helical membrane passes run 8-28 (LLAL…MLAI), 37-57 (AFVV…IVMA), 71-91 (GYAV…CTFG), 104-124 (EFYL…GSRH), 125-145 (LASL…LVGY), 159-179 (YMVL…LLYA), 203-223 (LMGG…LAPF), 235-255 (PAPV…CVLL), 269-289 (IHWL…LLAL), 303-323 (ISHF…QMPV), 327-347 (GVYL…ISMM), 374-394 (AVLT…GFIG), 408-427 (WWLS…YYLR), and 449-469 (AITS…ALGL).

The protein belongs to the complex I subunit 2 family. NDH-1 is composed of 14 different subunits. Subunits NuoA, H, J, K, L, M, N constitute the membrane sector of the complex.

Its subcellular location is the cell inner membrane. It catalyses the reaction a quinone + NADH + 5 H(+)(in) = a quinol + NAD(+) + 4 H(+)(out). NDH-1 shuttles electrons from NADH, via FMN and iron-sulfur (Fe-S) centers, to quinones in the respiratory chain. The immediate electron acceptor for the enzyme in this species is believed to be ubiquinone. Couples the redox reaction to proton translocation (for every two electrons transferred, four hydrogen ions are translocated across the cytoplasmic membrane), and thus conserves the redox energy in a proton gradient. The protein is NADH-quinone oxidoreductase subunit N of Aeromonas hydrophila subsp. hydrophila (strain ATCC 7966 / DSM 30187 / BCRC 13018 / CCUG 14551 / JCM 1027 / KCTC 2358 / NCIMB 9240 / NCTC 8049).